The sequence spans 246 residues: RNA polymerase sigma-B factor (246 aa).

The Polymerase core binding motif lies at 25–38; sequence DLIQEGNIGLMKAV. Residues 201–220 constitute a DNA-binding region (H-T-H motif); sequence LKELGEHFGFSRERARQLEI.

Belongs to the sigma-70 factor family.

Sigma factors are initiation factors that promote the attachment of RNA polymerase to specific initiation sites and are then released. This sigma factor is essential for late-stage differentiation of M.xanthus. This is RNA polymerase sigma-B factor (sigB) from Myxococcus xanthus.